We begin with the raw amino-acid sequence, 202 residues long: Dephospho-CoA kinase (202 aa).

The DPCK domain occupies 4-201 (VIGLTGGIAS…QKYLAMSKQN (198 aa)). 12-17 (ASGKTT) is a binding site for ATP.

The protein belongs to the CoaE family.

The protein localises to the cytoplasm. It carries out the reaction 3'-dephospho-CoA + ATP = ADP + CoA + H(+). It functions in the pathway cofactor biosynthesis; coenzyme A biosynthesis; CoA from (R)-pantothenate: step 5/5. In terms of biological role, catalyzes the phosphorylation of the 3'-hydroxyl group of dephosphocoenzyme A to form coenzyme A. The polypeptide is Dephospho-CoA kinase (Vibrio vulnificus (strain YJ016)).